We begin with the raw amino-acid sequence, 250 residues long: Global transcriptional regulator CodY (250 aa).

Residues 1–146 (MTLLEKTRKL…GATVVGLEIL (146 aa)) form a GAF domain region. Residues 194–213 (ASKIADKVGITRSVIVNALR) constitute a DNA-binding region (H-T-H motif).

The protein belongs to the CodY family.

The protein localises to the cytoplasm. Its function is as follows. DNA-binding global transcriptional regulator which is involved in the adaptive response to starvation and acts by directly or indirectly controlling the expression of numerous genes in response to nutrient availability. During rapid exponential growth, CodY is highly active and represses genes whose products allow adaptation to nutrient depletion. The polypeptide is Global transcriptional regulator CodY (Caldanaerobacter subterraneus subsp. tengcongensis (strain DSM 15242 / JCM 11007 / NBRC 100824 / MB4) (Thermoanaerobacter tengcongensis)).